A 276-amino-acid chain; its full sequence is Anthranilate synthase beta subunit 1, chloroplastic (276 aa).

A chloroplast-targeting transit peptide spans Met1–Lys50. The region spanning Pro74 to Glu273 is the Glutamine amidotransferase type-1 domain. Cys152 functions as the Nucleophile in the catalytic mechanism. Catalysis depends on residues His247 and Glu249.

In terms of assembly, heterotetramer consisting of two non-identical subunits: a beta subunit and a large alpha subunit. Expressed in the central cylinder of mature primary root zones, including pericycle and early lateral root primordia, and vasculature of cotyledons.

It is found in the plastid. The protein localises to the chloroplast. The enzyme catalyses chorismate + L-glutamine = anthranilate + pyruvate + L-glutamate + H(+). The protein operates within amino-acid biosynthesis; L-tryptophan biosynthesis; L-tryptophan from chorismate: step 1/5. In terms of biological role, part of a heterotetrameric complex that catalyzes the two-step biosynthesis of anthranilate, an intermediate in the biosynthesis of L-tryptophan. In the first step, the glutamine-binding beta subunit of anthranilate synthase (AS) provides the glutamine amidotransferase activity which generates ammonia as a substrate that, along with chorismate, is used in the second step, catalyzed by the large alpha subunit of AS to produce anthranilate. Plays an important regulatory role in auxin production via the tryptophan-dependent biosynthetic pathway. The chain is Anthranilate synthase beta subunit 1, chloroplastic (ASB1) from Arabidopsis thaliana (Mouse-ear cress).